The sequence spans 49 residues: Large ribosomal subunit protein bL33C (49 aa).

A disordered region spans residues 20–49; the sequence is NKNKRNNPDRLEKQKYCPRERKVTLHRETK. Basic and acidic residues predominate over residues 25-49; the sequence is NNPDRLEKQKYCPRERKVTLHRETK.

Belongs to the bacterial ribosomal protein bL33 family.

The polypeptide is Large ribosomal subunit protein bL33C (rpmG3) (Enterococcus faecalis (strain ATCC 700802 / V583)).